The sequence spans 388 residues: N5-carboxyaminoimidazole ribonucleotide synthase (388 aa).

ATP-binding positions include Lys-105, Lys-140, 174–177 (ESFV), Glu-182, and 267–268 (NE). The 189-residue stretch at 109-297 (RHFLQNLGLP…QFALQLQAVT (189 aa)) folds into the ATP-grasp domain.

It belongs to the PurK/PurT family. In terms of assembly, homodimer.

The catalysed reaction is 5-amino-1-(5-phospho-beta-D-ribosyl)imidazole + hydrogencarbonate + ATP = 5-carboxyamino-1-(5-phospho-D-ribosyl)imidazole + ADP + phosphate + 2 H(+). It participates in purine metabolism; IMP biosynthesis via de novo pathway; 5-amino-1-(5-phospho-D-ribosyl)imidazole-4-carboxylate from 5-amino-1-(5-phospho-D-ribosyl)imidazole (N5-CAIR route): step 1/2. Catalyzes the ATP-dependent conversion of 5-aminoimidazole ribonucleotide (AIR) and HCO(3)(-) to N5-carboxyaminoimidazole ribonucleotide (N5-CAIR). This Synechocystis sp. (strain ATCC 27184 / PCC 6803 / Kazusa) protein is N5-carboxyaminoimidazole ribonucleotide synthase.